We begin with the raw amino-acid sequence, 145 residues long: 3-hydroxyacyl-[acyl-carrier-protein] dehydratase FabZ (145 aa).

Histidine 47 is an active-site residue.

The protein belongs to the thioester dehydratase family. FabZ subfamily.

Its subcellular location is the cytoplasm. It carries out the reaction a (3R)-hydroxyacyl-[ACP] = a (2E)-enoyl-[ACP] + H2O. Involved in unsaturated fatty acids biosynthesis. Catalyzes the dehydration of short chain beta-hydroxyacyl-ACPs and long chain saturated and unsaturated beta-hydroxyacyl-ACPs. The chain is 3-hydroxyacyl-[acyl-carrier-protein] dehydratase FabZ from Chromohalobacter salexigens (strain ATCC BAA-138 / DSM 3043 / CIP 106854 / NCIMB 13768 / 1H11).